Consider the following 142-residue polypeptide: VapC ribonuclease R02377 (142 aa).

Residues 3–140 (FVDGSVIVAI…YKGNDFSQTD (138 aa)) enclose the PINc domain. Mg(2+) is bound by residues aspartate 5 and aspartate 115.

Belongs to the PINc/VapC protein family. Requires Mg(2+) as cofactor.

Its function is as follows. Toxic component of a type II toxin-antitoxin (TA) system. An RNase. This Rhizobium meliloti (strain 1021) (Ensifer meliloti) protein is VapC ribonuclease R02377.